The chain runs to 484 residues: Probable cytochrome P450 555A1 (484 aa).

A helical transmembrane segment spans residues 1–21; it reads MIIIVIVVFLFYFSFLNLNLN. Position 432 (Cys-432) interacts with heme.

This sequence belongs to the cytochrome P450 family. It depends on heme as a cofactor.

It is found in the membrane. The protein is Probable cytochrome P450 555A1 (cyp555A1) of Dictyostelium discoideum (Social amoeba).